A 443-amino-acid chain; its full sequence is Fatty acid desaturase 3 (443 aa).

At 1 to 130 (MGGVGEPDWE…EDMKLFEAKP (130 aa)) the chain is on the cytoplasmic side. One can recognise a Cytochrome b5 heme-binding domain in the interval 18 to 95 (LPTLRWEQVR…LQPLLIGELA (78 aa)). Residues 131–151 (AFFGLLLGHILAMEVLAWLMI) form a helical membrane-spanning segment. Position 152 (Y152) is a topological domain, lumenal. A helical transmembrane segment spans residues 153–173 (MLGPGWVPSTLAALILAISQA). Residues 174-259 (QSWCLQHDLG…KKKRRYLPYN (86 aa)) lie on the Cytoplasmic side of the membrane. Residues 180 to 184 (HDLGH) carry the Histidine box-1 motif. Residues 217 to 221 (HFQHH) carry the Histidine box-2 motif. Residues 260–280 (HQHLYFFLIGPPLLTLVNFEV) traverse the membrane as a helical segment. Topologically, residues 281 to 282 (EN) are lumenal. Residues 283 to 303 (LAYMLVCMQWMDLLWAASFYA) form a helical membrane-spanning segment. A topological domain (cytoplasmic) is located at residue R304. Residues 305–325 (FLLSYIPFYGIPGALLLFVAV) traverse the membrane as a helical segment. The Lumenal segment spans residues 326-443 (RVLESHWFVW…NVWLEAYLHQ (118 aa)). Positions 381-385 (QIEHH) match the Histidine box-3 motif.

This sequence belongs to the fatty acid desaturase type 1 family.

It localises to the endoplasmic reticulum membrane. The catalysed reaction is an N-acylsphing-4-enine + 2 Fe(II)-[cytochrome b5] + O2 + 2 H(+) = an N-acyl-sphinga-4E,14Z-dienine + 2 Fe(III)-[cytochrome b5] + 2 H2O. The enzyme catalyses N-(hexanoyl)sphing-4-enine + 2 Fe(II)-[cytochrome b5] + O2 + 2 H(+) = N-hexanoyl-sphinga-4E,14Z-dienine + 2 Fe(III)-[cytochrome b5] + 2 H2O. It catalyses the reaction sphing-4-enine + 2 Fe(II)-[cytochrome b5] + O2 + 2 H(+) = sphinga-4E,14Z-dienine + 2 Fe(III)-[cytochrome b5] + 2 H2O. It carries out the reaction (11E)-octadecenoyl-CoA + 2 Fe(II)-[cytochrome b5] + O2 + 2 H(+) = (11E,13Z)-octadecadienoyl-CoA + 2 Fe(III)-[cytochrome b5] + 2 H2O. The catalysed reaction is N-acyl-1-deoxysphinganine + 2 Fe(II)-[cytochrome b5] + O2 + 2 H(+) = N-acyl-1-deoxysphing-14Z-enine + 2 Fe(III)-[cytochrome b5] + 2 H2O. The enzyme catalyses an N-acylsphinganine + 2 Fe(II)-[cytochrome b5] + O2 + 2 H(+) = an N-acylsphing-14Z-enine + 2 Fe(III)-[cytochrome b5] + 2 H2O. It participates in lipid metabolism; polyunsaturated fatty acid biosynthesis. It functions in the pathway lipid metabolism; sphingolipid metabolism. In terms of biological role, mammals have different sphingoid bases that differ in their length and/or pattern of desaturation and hydroxyl groups. The predominant sphingoid base that comprises mammalian ceramides is sphing-4-enine (sphingosine or SPH) which has a trans (E) desaturation at carbon 4. FADS3 is a desaturase that introduces a cis (Z) double bond between carbon 14 and carbon 15 of the sphingoid base (also known as long chain base, LCB), producing LCBs such as sphinga-4,14-dienine (SPD, d18:2(4E,14Z)) from SPH. Prefers SPH-containing ceramides (N-acylsphing-4-enines) as substrates. Capable of metabolizing also the SPH in its free form. SPD ceramides occur widely in mammalian tissues and cells. Due to their unusual structure containing a cis double bond, SPD ceramides may have an opposite, negative role in lipid microdomain formation relative to conventional ceramides. Could be involved in the detoxification of 1-deoxy sphingolipids, by desaturating the cytotoxic 1-deoxysphinganine (1-deoxySA, m18:0), produced under pathological conditions, to 1-deoxysphingenine (1-deoxysphingosine, 1-deoxySO, m18:1). Although prefers SPH-containing ceramides (N-acylsphing-4-enines) as substrates, it also exhibits activity toward dihydrosphingosine-containing CERs (N-acylsphinganines) and produces 14Z-SPH-containing sphingolipids. Its desaturase mechanism involves an electron transfer facilitated by cytochrome b5. FADS3 also acts as a methyl-end fatty acyl coenzyme A (CoA) desaturase that introduces a cis double bond between the preexisting double bond and the terminal methyl group of the fatty acyl chain. Desaturates (11E)-octadecenoate (trans-vaccenoate, the predominant trans fatty acid in human milk) at carbon 13 to generate (11E,13Z)-octadecadienoate (also known as conjugated linoleic acid 11E,13Z-CLA). The sequence is that of Fatty acid desaturase 3 from Bos taurus (Bovine).